The chain runs to 962 residues: Glycine dehydrogenase (decarboxylating) (962 aa).

Position 709 is an N6-(pyridoxal phosphate)lysine (Lys-709).

The protein belongs to the GcvP family. The glycine cleavage system is composed of four proteins: P, T, L and H. It depends on pyridoxal 5'-phosphate as a cofactor.

The catalysed reaction is N(6)-[(R)-lipoyl]-L-lysyl-[glycine-cleavage complex H protein] + glycine + H(+) = N(6)-[(R)-S(8)-aminomethyldihydrolipoyl]-L-lysyl-[glycine-cleavage complex H protein] + CO2. Functionally, the glycine cleavage system catalyzes the degradation of glycine. The P protein binds the alpha-amino group of glycine through its pyridoxal phosphate cofactor; CO(2) is released and the remaining methylamine moiety is then transferred to the lipoamide cofactor of the H protein. This Shewanella sp. (strain MR-7) protein is Glycine dehydrogenase (decarboxylating).